The chain runs to 410 residues: Putative competence-damage inducible protein (410 aa).

The protein belongs to the CinA family.

The chain is Putative competence-damage inducible protein from Clostridium beijerinckii (strain ATCC 51743 / NCIMB 8052) (Clostridium acetobutylicum).